The sequence spans 550 residues: Cell pattern formation-associated protein STUA (550 aa).

One can recognise an HTH APSES-type domain in the interval 86-192 (RVTATLWEDE…HNIGALLYHP (107 aa)). The H-T-H motif DNA-binding region spans 120 to 141 (GTKLLNVAGMTRGRRDGILKSE). Residues 246 to 266 (SLANGPQSLASTPQPLTNGSQ) show a composition bias toward polar residues. 4 disordered regions span residues 246–277 (SLANGPQSLASTPQPLTNGSQPPMPNGGGMLK), 371–412 (HHQP…VKRR), 447–467 (KRRDDEAETPRPGPNVHDHLN), and 527–550 (APVYDTGARPPSAISAPRRQQSFG). Over residues 385–395 (RGRDEDDDVHR) the composition is skewed to basic and acidic residues. Residues 517-546 (TVAASPSYPSAPVYDTGARPPSAISAPRRQ) are nuclear localization domain.

It belongs to the EFG1/PHD1/stuA family.

The protein resides in the nucleus. In terms of biological role, transcription factor that regulates asexual reproduction. Binds the StuA-response elements (StRE) with the consensus sequence 5'-(A/T)CGCG(T/A)N(A/C)-3' at the promoters of target genes. Differentially regulates the development of macroconidia, microconidia, and chlamydospores. Acts as a positive regulator for the development of macroconidia and as a negative regulator for the development of chlamydospores. Involved in microconidium formation specifically in infected plants. This is Cell pattern formation-associated protein STUA from Fusarium oxysporum (Fusarium vascular wilt).